A 312-amino-acid polypeptide reads, in one-letter code: DNA-directed RNA polymerase subunit alpha (312 aa).

The interval 1–229 (MLQYQIDRIE…ELFQPLATVT (229 aa)) is alpha N-terminal domain (alpha-NTD). The interval 246-312 (IPLEELNLSV…ISIPQSRTSA (67 aa)) is alpha C-terminal domain (alpha-CTD).

The protein belongs to the RNA polymerase alpha chain family. In terms of assembly, in cyanobacteria the RNAP catalytic core is composed of 2 alpha, 1 beta, 1 beta', 1 gamma and 1 omega subunit. When a sigma factor is associated with the core the holoenzyme is formed, which can initiate transcription.

It catalyses the reaction RNA(n) + a ribonucleoside 5'-triphosphate = RNA(n+1) + diphosphate. Its function is as follows. DNA-dependent RNA polymerase catalyzes the transcription of DNA into RNA using the four ribonucleoside triphosphates as substrates. The chain is DNA-directed RNA polymerase subunit alpha from Prochlorococcus marinus (strain SARG / CCMP1375 / SS120).